The primary structure comprises 168 residues: Probable prefoldin subunit 5 (168 aa).

Belongs to the prefoldin subunit alpha family. Heterohexamer of two PFD-alpha type and four PFD-beta type subunits.

Its function is as follows. Binds specifically to cytosolic chaperonin (c-CPN) and transfers target proteins to it. Binds to nascent polypeptide chain and promotes folding in an environment in which there are many competing pathways for nonnative proteins. This is Probable prefoldin subunit 5 from Drosophila melanogaster (Fruit fly).